The chain runs to 376 residues: 3-dehydroquinate synthase (376 aa).

NAD(+) contacts are provided by residues 115–119, 139–140, lysine 152, and lysine 161; these read GVIGD and TS. 3 residues coordinate Zn(2+): glutamate 194, histidine 256, and histidine 275.

It belongs to the sugar phosphate cyclases superfamily. Dehydroquinate synthase family. The cofactor is Co(2+). Zn(2+) serves as cofactor. NAD(+) is required as a cofactor.

It is found in the cytoplasm. It carries out the reaction 7-phospho-2-dehydro-3-deoxy-D-arabino-heptonate = 3-dehydroquinate + phosphate. It participates in metabolic intermediate biosynthesis; chorismate biosynthesis; chorismate from D-erythrose 4-phosphate and phosphoenolpyruvate: step 2/7. In terms of biological role, catalyzes the conversion of 3-deoxy-D-arabino-heptulosonate 7-phosphate (DAHP) to dehydroquinate (DHQ). This chain is 3-dehydroquinate synthase, found in Rhizobium leguminosarum bv. trifolii (strain WSM2304).